Consider the following 569-residue polypeptide: Urease subunit alpha (569 aa).

The 439-residue stretch at 131 to 569 folds into the Urease domain; that stretch reads GGIDTHIHFI…LPMAQRYFLL (439 aa). Ni(2+) contacts are provided by H136, H138, and K219. The residue at position 219 (K219) is an N6-carboxylysine. H221 is a binding site for substrate. Ni(2+) is bound by residues H248 and H274. H322 acts as the Proton donor in catalysis. A Ni(2+)-binding site is contributed by D362.

Belongs to the metallo-dependent hydrolases superfamily. Urease alpha subunit family. Heterotrimer of UreA (gamma), UreB (beta) and UreC (alpha) subunits. Three heterotrimers associate to form the active enzyme. The cofactor is Ni cation. In terms of processing, carboxylation allows a single lysine to coordinate two nickel ions.

It localises to the cytoplasm. It catalyses the reaction urea + 2 H2O + H(+) = hydrogencarbonate + 2 NH4(+). The protein operates within nitrogen metabolism; urea degradation; CO(2) and NH(3) from urea (urease route): step 1/1. The chain is Urease subunit alpha from Synechococcus sp. (strain RCC307).